The primary structure comprises 334 residues: DNA-directed RNA polymerase subunit alpha (334 aa).

Residues 1 to 234 form an alpha N-terminal domain (alpha-NTD) region; that stretch reads MQTKVNELLK…SQLAAFVELQ (234 aa). The interval 248-334 is alpha C-terminal domain (alpha-CTD); it reads IDPILLRPVD…LKDQDKKASG (87 aa).

The protein belongs to the RNA polymerase alpha chain family. Homodimer. The RNAP catalytic core consists of 2 alpha, 1 beta, 1 beta' and 1 omega subunit. When a sigma factor is associated with the core the holoenzyme is formed, which can initiate transcription.

It catalyses the reaction RNA(n) + a ribonucleoside 5'-triphosphate = RNA(n+1) + diphosphate. DNA-dependent RNA polymerase catalyzes the transcription of DNA into RNA using the four ribonucleoside triphosphates as substrates. The polypeptide is DNA-directed RNA polymerase subunit alpha (Thioalkalivibrio sulfidiphilus (strain HL-EbGR7)).